A 310-amino-acid polypeptide reads, in one-letter code: tRNA pseudouridine synthase B (310 aa).

The active-site Nucleophile is D49.

It belongs to the pseudouridine synthase TruB family. Type 1 subfamily.

It catalyses the reaction uridine(55) in tRNA = pseudouridine(55) in tRNA. Functionally, responsible for synthesis of pseudouridine from uracil-55 in the psi GC loop of transfer RNAs. The polypeptide is tRNA pseudouridine synthase B (Sinorhizobium medicae (strain WSM419) (Ensifer medicae)).